The sequence spans 352 residues: Beta-1,4-xylanase (352 aa).

A signal peptide spans 1 to 23 (MINQRFSILVLLLILLTFSLGFL). The region spanning 29–352 (GMEIPSLKEV…KKAFWEIVKF (324 aa)) is the GH10 domain. Residue E155 is the Proton donor of the active site. The Nucleophile role is filled by E262.

It belongs to the glycosyl hydrolase 10 (cellulase F) family.

The protein resides in the secreted. It carries out the reaction Endohydrolysis of (1-&gt;4)-beta-D-xylosidic linkages in xylans.. It participates in glycan degradation; xylan degradation. The protein is Beta-1,4-xylanase (xynA) of Dictyoglomus thermophilum.